The sequence spans 231 residues: uncharacterized protein (231 aa).

Helical transmembrane passes span 4-24 (YIIY…LQIS), 29-49 (SMIF…LVIG), 58-78 (AGNA…ALPL), 95-115 (TVVI…LLLG), 147-167 (VTAV…YLVL), and 211-231 (LCGI…YFFV).

The protein belongs to the YohK (E.coli)/YwbG (IPA-22R) (B.subtilis) family.

It is found in the cell membrane. This is an uncharacterized protein from Haemophilus influenzae (strain ATCC 51907 / DSM 11121 / KW20 / Rd).